Here is a 229-residue protein sequence, read N- to C-terminus: UPF0758 protein Ppro_3582 (229 aa).

The interval 1–20 is disordered; it reads MCPGIREWPEDERPREKMLR. The segment covering 7–19 has biased composition (basic and acidic residues); the sequence is EWPEDERPREKML. The region spanning 107-229 is the MPN domain; that stretch reads RFTSPRQVFD…YLSFVERGVL (123 aa). H178, H180, and D191 together coordinate Zn(2+). The short motif at 178–191 is the JAMM motif element; that stretch reads HNHPTGDPTPSQED.

The protein belongs to the UPF0758 family.

The protein is UPF0758 protein Ppro_3582 of Pelobacter propionicus (strain DSM 2379 / NBRC 103807 / OttBd1).